We begin with the raw amino-acid sequence, 64 residues long: Sperm protamine P1 (64 aa).

Positions 1–64 are disordered; sequence MVRYRRHSRS…QSRRRRRRRY (64 aa).

The protein belongs to the protamine P1 family. As to expression, testis.

The protein resides in the nucleus. It localises to the chromosome. Functionally, protamines substitute for histones in the chromatin of sperm during the haploid phase of spermatogenesis. They compact sperm DNA into a highly condensed, stable and inactive complex. This Dromiciops gliroides (Monito del Monte) protein is Sperm protamine P1 (PRM1).